Reading from the N-terminus, the 668-residue chain is MSNNNNKDDSELQSRTHYYNPDRTAIPVKDDVDQLDKFGSPKLSANDHSFTNTDSVTSEDRPFSSPVSTLTSNSANFSDSSLQNSPVHPIPSPALSPTLNLGSRPDVKRVSSGGYFALPKQLTSIRQTHRPMSQQHRVPSFHPASDTAPPSPIPFHHHLRKKGSSMSIPGQTSIVSSNNGSEATNPPEEKLAIIMVGLPARGKSYIVNKLVRYYNWLQYNCKAFNVGNFRRKHASHSHDDASFFDPSNEEASKLRESFAMDTLDALLQWFEEEDGVVGIFDATNSTSKRRKAIVDHLSKVPYVTTLFIESICNDEQLIAANMRMKLVGPDYKDLNPEQSLRDFQERVRMYERKYEPLGKSEEDLNLRYIKVINVGKKVVAFNIRGFLAGQAVFFLLNFNLSPRQIWVTRHGESVDNVRGRIGGNAELTPLGRQFSEDLALFIDEKRDEFQERLYNDYSKESHLLQHGSHSFNGKQFETSFNCLTPSENTVNDPQVLDPEDEERLEKPYSVWTSMMQRSIQTAAYFDEEQYDIKAMRMLNEICSGICDGLTYEEIKSIYPKEYEARKLDKLNYRYPGSGGESYLDVIYRLQSVIVEIERMKHHVLVIGHRVITRIIIAYFLGCRREDIAYLNVPLHTVYCIEPQPYGTDFYQYNYDPNTRKFSRVPFSL.

Over residues 1 to 14 the composition is skewed to basic and acidic residues; it reads MSNNNNKDDSELQS. Disordered stretches follow at residues 1–105 and 136–185; these read MSNN…GSRP and HRVP…EATN. Polar residues-rich tracts occupy residues 46 to 56, 65 to 86, and 164 to 184; these read NDHSFTNTDSV, SPVS…QNSP, and SSMS…SEAT. 197–204 is a binding site for ATP; that stretch reads GLPARGKS. Catalysis depends on residues Asp-281 and Cys-312. Arg-346 is a beta-D-fructose 6-phosphate binding site. The active site involves Glu-540. The Proton donor role is filled by His-608.

The catalysed reaction is beta-D-fructose 6-phosphate + ATP = beta-D-fructose 2,6-bisphosphate + ADP + H(+). In terms of biological role, synthesis of fructose 2,6-bisphosphate. This is Probable 6-phosphofructo-2-kinase PB17E12.14c from Schizosaccharomyces pombe (strain 972 / ATCC 24843) (Fission yeast).